Consider the following 113-residue polypeptide: Iron-sulfur cluster insertion protein ErpA (113 aa).

3 residues coordinate iron-sulfur cluster: Cys-41, Cys-105, and Cys-107.

It belongs to the HesB/IscA family. As to quaternary structure, homodimer. The cofactor is iron-sulfur cluster.

In terms of biological role, required for insertion of 4Fe-4S clusters for at least IspG. The polypeptide is Iron-sulfur cluster insertion protein ErpA (Aliivibrio salmonicida (strain LFI1238) (Vibrio salmonicida (strain LFI1238))).